A 305-amino-acid chain; its full sequence is Coenzyme PQQ synthesis protein B (305 aa).

The protein belongs to the PqqB family.

The protein operates within cofactor biosynthesis; pyrroloquinoline quinone biosynthesis. In terms of biological role, may be involved in the transport of PQQ or its precursor to the periplasm. In Methylobacillus flagellatus (strain ATCC 51484 / DSM 6875 / VKM B-1610 / KT), this protein is Coenzyme PQQ synthesis protein B.